A 304-amino-acid polypeptide reads, in one-letter code: Ribonuclease Z (304 aa).

Residues His-63, His-65, Asp-67, His-68, His-143, Asp-213, and His-271 each coordinate Zn(2+). The active-site Proton acceptor is Asp-67.

Belongs to the RNase Z family. As to quaternary structure, homodimer. Zn(2+) serves as cofactor.

The enzyme catalyses Endonucleolytic cleavage of RNA, removing extra 3' nucleotides from tRNA precursor, generating 3' termini of tRNAs. A 3'-hydroxy group is left at the tRNA terminus and a 5'-phosphoryl group is left at the trailer molecule.. Zinc phosphodiesterase, which displays some tRNA 3'-processing endonuclease activity. Probably involved in tRNA maturation, by removing a 3'-trailer from precursor tRNA. The chain is Ribonuclease Z from Bacteroides fragilis (strain ATCC 25285 / DSM 2151 / CCUG 4856 / JCM 11019 / LMG 10263 / NCTC 9343 / Onslow / VPI 2553 / EN-2).